The sequence spans 204 residues: Ricin B-like lectin R40G3 (204 aa).

The Ricin B-type lectin domain maps to 54–200 (TVKVYCRANP…CEGDNQRWKI (147 aa)).

Expressed in shoots and lamina.

Lectin which binds carbohydrates in vitro. Interacts through its lectin domain with glycan structures containing specific motifs. This Oryza sativa subsp. japonica (Rice) protein is Ricin B-like lectin R40G3.